We begin with the raw amino-acid sequence, 618 residues long: Beta-xylosidase (618 aa).

2 disordered regions span residues 76–100 (ERDR…QEES) and 463–509 (LEPQ…PPIQ).

Belongs to the glycosyl hydrolase 52 family.

The protein resides in the secreted. It carries out the reaction Hydrolysis of (1-&gt;4)-beta-D-xylans, to remove successive D-xylose residues from the non-reducing termini.. It participates in glycan degradation; xylan degradation. This chain is Beta-xylosidase (xylA), found in Geobacillus stearothermophilus (Bacillus stearothermophilus).